The primary structure comprises 134 residues: Putative thioredoxin 2 (134 aa).

Residues serine 3–lysine 106 enclose the Thioredoxin domain. Residues cysteine 31 and cysteine 34 are joined by a disulfide bond. Positions alanine 115 to glutamine 134 are disordered. Positions alanine 117–glutamine 134 are enriched in low complexity.

The protein belongs to the thioredoxin family.

The protein resides in the cytoplasm. Component of the thioredoxin-thioredoxin reductase system. Participates in various redox reactions through the reversible oxidation of its active center dithiol to a disulfide and catalyzes dithiol-disulfide exchange reactions. This Streptomyces coelicolor (strain ATCC BAA-471 / A3(2) / M145) protein is Putative thioredoxin 2 (trxC).